Reading from the N-terminus, the 178-residue chain is Bifunctional protein PyrR (178 aa).

Residues 41-42 (RR), 103-111 (DDVLYTGRT), and R136 contribute to the substrate site. The PRPP-binding motif lies at 99–111 (VILVDDVLYTGRT).

Belongs to the purine/pyrimidine phosphoribosyltransferase family. PyrR subfamily. Homodimer and homohexamer; in equilibrium.

The enzyme catalyses UMP + diphosphate = 5-phospho-alpha-D-ribose 1-diphosphate + uracil. Functionally, regulates transcriptional attenuation of the pyrimidine nucleotide (pyr) operon by binding in a uridine-dependent manner to specific sites on pyr mRNA. This disrupts an antiterminator hairpin in the RNA and favors formation of a downstream transcription terminator, leading to a reduced expression of downstream genes. Its function is as follows. Also displays a weak uracil phosphoribosyltransferase activity which is not physiologically significant. The protein is Bifunctional protein PyrR of Clostridium acetobutylicum (strain ATCC 824 / DSM 792 / JCM 1419 / IAM 19013 / LMG 5710 / NBRC 13948 / NRRL B-527 / VKM B-1787 / 2291 / W).